A 513-amino-acid chain; its full sequence is Cytochrome P450 4p1 (513 aa).

Heme-binding residues include E320 and C459.

The protein belongs to the cytochrome P450 family. Requires heme as cofactor.

It localises to the endoplasmic reticulum membrane. The protein resides in the microsome membrane. May be involved in the metabolism of insect hormones and in the breakdown of synthetic insecticides. This is Cytochrome P450 4p1 (Cyp4p1) from Drosophila melanogaster (Fruit fly).